A 342-amino-acid polypeptide reads, in one-letter code: GTPase Obg (342 aa).

The Obg domain occupies 1 to 159; that stretch reads MKFLDLCKVY…RTIWLRLKLI (159 aa). An OBG-type G domain is found at 160–327; sequence ADAGLLGLPN…VLRALWAEID (168 aa). Residues 166 to 173, 191 to 195, 212 to 215, 279 to 282, and 308 to 310 contribute to the GTP site; these read GLPNAGKS, FTTLV, DIPG, NKID, and SGV. S173 and T193 together coordinate Mg(2+).

This sequence belongs to the TRAFAC class OBG-HflX-like GTPase superfamily. OBG GTPase family. Monomer. Mg(2+) is required as a cofactor.

The protein resides in the cytoplasm. Functionally, an essential GTPase which binds GTP, GDP and possibly (p)ppGpp with moderate affinity, with high nucleotide exchange rates and a fairly low GTP hydrolysis rate. Plays a role in control of the cell cycle, stress response, ribosome biogenesis and in those bacteria that undergo differentiation, in morphogenesis control. The polypeptide is GTPase Obg (Cereibacter sphaeroides (strain KD131 / KCTC 12085) (Rhodobacter sphaeroides)).